Consider the following 70-residue polypeptide: Putative membrane protein insertion efficiency factor (70 aa).

It belongs to the UPF0161 family.

The protein localises to the cell inner membrane. In terms of biological role, could be involved in insertion of integral membrane proteins into the membrane. In Sphingopyxis alaskensis (strain DSM 13593 / LMG 18877 / RB2256) (Sphingomonas alaskensis), this protein is Putative membrane protein insertion efficiency factor.